We begin with the raw amino-acid sequence, 201 residues long: ATP-dependent Clp protease proteolytic subunit (201 aa).

Ser-100 acts as the Nucleophile in catalysis. His-125 is a catalytic residue.

Belongs to the peptidase S14 family. Component of the chloroplastic Clp protease core complex.

The protein localises to the plastid. It is found in the chloroplast stroma. It carries out the reaction Hydrolysis of proteins to small peptides in the presence of ATP and magnesium. alpha-casein is the usual test substrate. In the absence of ATP, only oligopeptides shorter than five residues are hydrolyzed (such as succinyl-Leu-Tyr-|-NHMec, and Leu-Tyr-Leu-|-Tyr-Trp, in which cleavage of the -Tyr-|-Leu- and -Tyr-|-Trp bonds also occurs).. Functionally, cleaves peptides in various proteins in a process that requires ATP hydrolysis. Has a chymotrypsin-like activity. Plays a major role in the degradation of misfolded proteins. The protein is ATP-dependent Clp protease proteolytic subunit of Ranunculus macranthus (Large buttercup).